A 522-amino-acid chain; its full sequence is Colicin-E1 (522 aa).

Disordered regions lie at residues 26–52 (NGTP…AAIH) and 136–165 (EEKA…REKA). Gly residues predominate over residues 30–42 (DGSGSGGGGGKGG). Transmembrane regions (helical) follow at residues 471-487 (AADA…FSLL) and 494-510 (IWGI…YIDK).

Belongs to the channel forming colicin family.

The protein resides in the cell membrane. This colicin is a channel-forming colicin. This class of transmembrane toxins depolarize the cytoplasmic membrane, leading to dissipation of cellular energy. In terms of biological role, colicins are polypeptide toxins produced by and active against E.coli and closely related bacteria. The polypeptide is Colicin-E1 (cea) (Escherichia coli).